The following is a 676-amino-acid chain: MMQPADIVAQMRQLIQLIAKHNHAYYVMDQPSITDNEYDQLFHQLKALEAEYPELTQADTPTNRVGGQALSKFETVTHAVPMLSLGNVFNQEDLFAFARRIEERLPNQQIQYDVELKLDGLAISLWYENGVLVRGVTRGDGETGEDITQNVKTIRNLPKHLQHHSVETPRFLEVRGEVLMPKQGFERLNAANEAKGEKTFANPRNAAAGSLRQLDPAIAASRPLAFYAYGIAQCEPHHGLGSMHESLQWLTQLGFEIAERQFLCSSIQEVQQCYEQIQQERPDLAVEIDGMVIKVDDLKQQQQLGFLSREPRWATAYKFPAEVAMTTVENIDWQVGRTGTLTPVARLQPVFVGGVTVSNVTLHNIGEIHRLDVRVGDRVSVYRSGDVIPKVEKVWPEFRPELAEIVQLPEQCPVCSSPVVMPEGEALARCSGGLYCAAQRIEAIRHFVSRKALDIEGLGDRWVESLLHLDLLKDVADIYHLHEHREQLLTIEKMGEKSVQNLMDAIEASKKTTLARFIYALGIRGVGETTARMLANTFQTLDALKQADIEALKKTPDVGDITAEWIYDFFLAEHNIEVLDRLLAAGIHWDAPLAPTRQPLNGESWVVTGTLETMGRDEATQRLQALGARVSGSVSSKTKCVVAGEKAGSKLDKAEKLQIRVMNEQEFLAFLAQYSA.

Residues 35–39 (DNEYD), 84–85 (SL), and glutamate 115 each bind NAD(+). Residue lysine 117 is the N6-AMP-lysine intermediate of the active site. Residues arginine 138, glutamate 177, lysine 294, and lysine 318 each coordinate NAD(+). Residues cysteine 412, cysteine 415, cysteine 430, and cysteine 436 each coordinate Zn(2+). Residues 595–676 (PTRQPLNGES…FLAFLAQYSA (82 aa)) enclose the BRCT domain.

The protein belongs to the NAD-dependent DNA ligase family. LigA subfamily. Mg(2+) is required as a cofactor. Mn(2+) serves as cofactor.

It catalyses the reaction NAD(+) + (deoxyribonucleotide)n-3'-hydroxyl + 5'-phospho-(deoxyribonucleotide)m = (deoxyribonucleotide)n+m + AMP + beta-nicotinamide D-nucleotide.. Its function is as follows. DNA ligase that catalyzes the formation of phosphodiester linkages between 5'-phosphoryl and 3'-hydroxyl groups in double-stranded DNA using NAD as a coenzyme and as the energy source for the reaction. It is essential for DNA replication and repair of damaged DNA. In Acinetobacter baylyi (strain ATCC 33305 / BD413 / ADP1), this protein is DNA ligase.